We begin with the raw amino-acid sequence, 186 residues long: Ribosome-recycling factor (186 aa).

It belongs to the RRF family.

The protein localises to the cytoplasm. Its function is as follows. Responsible for the release of ribosomes from messenger RNA at the termination of protein biosynthesis. May increase the efficiency of translation by recycling ribosomes from one round of translation to another. The protein is Ribosome-recycling factor of Brucella abortus (strain S19).